Reading from the N-terminus, the 193-residue chain is ATP synthase subunit b (193 aa).

A helical transmembrane segment spans residues 24–44; that stretch reads PLAELIVGLLAFGLLVGFFFW.

The protein belongs to the ATPase B chain family. In terms of assembly, F-type ATPases have 2 components, F(1) - the catalytic core - and F(0) - the membrane proton channel. F(1) has five subunits: alpha(3), beta(3), gamma(1), delta(1), epsilon(1). F(0) has three main subunits: a(1), b(2) and c(10-14). The alpha and beta chains form an alternating ring which encloses part of the gamma chain. F(1) is attached to F(0) by a central stalk formed by the gamma and epsilon chains, while a peripheral stalk is formed by the delta and b chains.

The protein resides in the cell membrane. Functionally, f(1)F(0) ATP synthase produces ATP from ADP in the presence of a proton or sodium gradient. F-type ATPases consist of two structural domains, F(1) containing the extramembraneous catalytic core and F(0) containing the membrane proton channel, linked together by a central stalk and a peripheral stalk. During catalysis, ATP synthesis in the catalytic domain of F(1) is coupled via a rotary mechanism of the central stalk subunits to proton translocation. Component of the F(0) channel, it forms part of the peripheral stalk, linking F(1) to F(0). In Parafrankia sp. (strain EAN1pec), this protein is ATP synthase subunit b.